The primary structure comprises 128 residues: QQSKPEELLKLRQGLMQTLKSQWAPIAGFAAGKADLPADAAQRAENMVLVAKLAPIGWAKGTEALPNSETKAEAFGAKSAQFMEGWKAMAAESTKLAAAAKAGPDALKAQAAATGKVCKACHEEFKQD.

7 residues coordinate heme c: Q13, Q17, E69, T70, C118, C121, and H122.

Post-translationally, binds 1 heme c group covalently per subunit.

In terms of biological role, cytochrome c' is the most widely occurring bacterial c-type cytochrome. Cytochromes c' are high-spin proteins and the heme has no sixth ligand. Their exact function is not known. This is Cytochrome c' from Magnetospirillum fulvum (Rhodospirillum fulvum).